The sequence spans 159 residues: SsrA-binding protein (159 aa).

The protein belongs to the SmpB family.

It is found in the cytoplasm. Required for rescue of stalled ribosomes mediated by trans-translation. Binds to transfer-messenger RNA (tmRNA), required for stable association of tmRNA with ribosomes. tmRNA and SmpB together mimic tRNA shape, replacing the anticodon stem-loop with SmpB. tmRNA is encoded by the ssrA gene; the 2 termini fold to resemble tRNA(Ala) and it encodes a 'tag peptide', a short internal open reading frame. During trans-translation Ala-aminoacylated tmRNA acts like a tRNA, entering the A-site of stalled ribosomes, displacing the stalled mRNA. The ribosome then switches to translate the ORF on the tmRNA; the nascent peptide is terminated with the 'tag peptide' encoded by the tmRNA and targeted for degradation. The ribosome is freed to recommence translation, which seems to be the essential function of trans-translation. The protein is SsrA-binding protein of Acidothermus cellulolyticus (strain ATCC 43068 / DSM 8971 / 11B).